The primary structure comprises 467 residues: UPF0236 protein TTE0033/TTE0744/TTE0838/TTE0852/TTE1082/TTE1247/TTE1519/TTE1678/TTE1739/TTE1823/TTE2212 (467 aa).

The protein belongs to the UPF0236 family.

The sequence is that of UPF0236 protein TTE0033/TTE0744/TTE0838/TTE0852/TTE1082/TTE1247/TTE1519/TTE1678/TTE1739/TTE1823/TTE2212 from Caldanaerobacter subterraneus subsp. tengcongensis (strain DSM 15242 / JCM 11007 / NBRC 100824 / MB4) (Thermoanaerobacter tengcongensis).